A 304-amino-acid chain; its full sequence is ATP synthase gamma chain (304 aa).

The protein belongs to the ATPase gamma chain family. As to quaternary structure, F-type ATPases have 2 components, CF(1) - the catalytic core - and CF(0) - the membrane proton channel. CF(1) has five subunits: alpha(3), beta(3), gamma(1), delta(1), epsilon(1). CF(0) has three main subunits: a, b and c.

It is found in the cell membrane. Functionally, produces ATP from ADP in the presence of a proton gradient across the membrane. The gamma chain is believed to be important in regulating ATPase activity and the flow of protons through the CF(0) complex. In Mycolicibacterium paratuberculosis (strain ATCC BAA-968 / K-10) (Mycobacterium paratuberculosis), this protein is ATP synthase gamma chain.